The chain runs to 1321 residues: Bile salt export pump (1321 aa).

The Cytoplasmic portion of the chain corresponds to 1–62 (MSDSVILRSV…FSSSKDIWLM (62 aa)). The ABC transmembrane type-1 1 domain occupies 62–385 (MLMGGVCALL…ASSCLEIFST (324 aa)). The helical transmembrane segment at 63 to 83 (LMGGVCALLHGMAQPGILIIF) threads the bilayer. Residues 84-147 (GIMTDIFIKY…MIKFSGIYAG (64 aa)) are Extracellular-facing. Residues asparagine 109, asparagine 116, asparagine 122, and asparagine 125 are each glycosylated (N-linked (GlcNAc...) asparagine). The chain crosses the membrane as a helical span at residues 148–168 (VGMTVLILGYFQIRLWVITGA). Topologically, residues 169–215 (RQIRRMRKIYFRRIMRMEIGWFDCTSVGELNSRFADDIEKINDAIAD) are cytoplasmic. A helical transmembrane segment spans residues 216-236 (QLAHFLQRMSTAMCGLLLGFY). Over 237-240 (RGWK) the chain is Extracellular. The chain crosses the membrane as a helical span at residues 241–261 (LTLVILAVSPLIGIGAAVIGL). At 262–319 (SIAKFTELELKAYAKAGSIADEVLSSIRTVAAFGGENKEVERYEKNLVFAQRWGIWKG) the chain is on the cytoplasmic side. A helical membrane pass occupies residues 320-340 (MVMGFFTGYMWCLIFFCYALA). Residues 341–353 (FWYGSTLVLDEEE) lie on the Extracellular side of the membrane. A helical membrane pass occupies residues 354–374 (YTPGTLVQIFLCVILAAMNIG). The Cytoplasmic portion of the chain corresponds to 375–755 (HASSCLEIFS…KYNIPEWHYI (381 aa)). The ABC transporter 1 domain occupies 420 to 656 (IEFHNVTFHY…KGVYFMLVTL (237 aa)). 455 to 462 (GSSGAGKS) lines the ATP pocket. Threonine 586 bears the Phosphothreonine mark. Residue serine 587 is modified to Phosphoserine. Residues 651–674 (FMLVTLQSQGDNAHKETSIMGKDA) form an interaction with HAX1 region. Phosphoserine is present on residues serine 692, serine 703, and serine 706. In terms of domain architecture, ABC transmembrane type-1 2 spans 755-1043 (ILVGSLSAAI…TFSYTPSYAK (289 aa)). Residues 756–776 (LVGSLSAAINGAVTPIYSLLF) form a helical membrane-spanning segment. Over 777–794 (SQLLGTFSLLDKEQQRSE) the chain is Extracellular. Residues 795–815 (IHSMCLFFVILGCVSIFTQFL) traverse the membrane as a helical segment. The Cytoplasmic segment spans residues 816 to 869 (QGYTFAKSGELLTKRLRKFGFKAMLGQDIGWFDDLRNNPGVLTTRLATDASQVQ). The next 2 membrane-spanning stretches (helical) occupy residues 870–890 (GATG…IAAL) and 891–911 (LIAF…FPFL). Residues 912-979 (ALSGAVQTKM…SYKTAVRKAN (68 aa)) are Cytoplasmic-facing. The helical transmembrane segment at 980–1000 (IYGLCFAFSQGIAFLANSAAY) threads the bilayer. Residues 1001-1011 (RYGGYLIAYEG) are Extracellular-facing. Residues 1012–1032 (LGFSHVFRVVSSVALSATAVG) traverse the membrane as a helical segment. The Cytoplasmic portion of the chain corresponds to 1033 to 1321 (RTFSYTPSYA…KLVITGAPIS (289 aa)). The ABC transporter 2 domain occupies 1078-1316 (IDFIDCKFTY…KGAYYKLVIT (239 aa)). 1113–1120 (GSSGCGKS) contacts ATP. Residue serine 1321 is modified to Phosphoserine.

It belongs to the ABC transporter superfamily. ABCB family. Multidrug resistance exporter (TC 3.A.1.201) subfamily. Interacts with HAX1. Interacts with the adapter protein complex 2 (AP-2) throught AP2A2 or AP2A1; this interaction regulates cell membrane expression of ABCB11 through its internalization in a clathrin-dependent manner and its subsequent degradation. Ubiquitinated; short-chain ubiquitination regulates cell-Surface expression of ABCB11. In terms of processing, N-glycosylated. In terms of tissue distribution, expressed predominantly, if not exclusively in the liver, where it was further localized to the canalicular microvilli and to subcanalicular vesicles of the hepatocytes by in situ.

Its subcellular location is the apical cell membrane. The protein localises to the recycling endosome membrane. It localises to the endosome. The protein resides in the cell membrane. It carries out the reaction cholate(in) + ATP + H2O = cholate(out) + ADP + phosphate + H(+). The enzyme catalyses taurocholate(in) + ATP + H2O = taurocholate(out) + ADP + phosphate + H(+). The catalysed reaction is glycocholate(in) + ATP + H2O = glycocholate(out) + ADP + phosphate + H(+). It catalyses the reaction glycochenodeoxycholate(in) + ATP + H2O = glycochenodeoxycholate(out) + ADP + phosphate + H(+). It carries out the reaction taurochenodeoxycholate(in) + ATP + H2O = taurochenodeoxycholate(out) + ADP + phosphate + H(+). The enzyme catalyses glycoursodeoxycholate(in) + ATP + H2O = glycoursodeoxycholate(out) + ADP + phosphate + H(+). The catalysed reaction is tauroursodeoxycholate(in) + ATP + H2O = tauroursodeoxycholate(out) + ADP + phosphate + H(+). It catalyses the reaction taurodeoxycholate(in) + ATP + H2O = taurodeoxycholate(out) + ADP + phosphate + H(+). It carries out the reaction pravastatin(in) + ATP + H2O = pravastatin(out) + ADP + phosphate + H(+). The uptake of taurocholate is inhibited by taurolithocholate sulfate with an IC(50) of 52.9 uM. Pravastatin competitively inhibits the transport of taurocholic acid. Cyclosporin A, glibenclamide, rifampicin and troglitazonestrongly competitively inhibit the transport activity of taurocholate. The canalicular transport activity of taurocholate is strongly dependent on canalicular membrane cholesterol content. The uptake of taurocholate is increased by short- and medium-chain fatty acids. Cholesterol increases transport capacity of taurocholate without affecting the affinity for the substrate. Its function is as follows. Catalyzes the transport of the major hydrophobic bile salts, such as taurine and glycine-conjugated cholic acid across the canalicular membrane of hepatocytes in an ATP-dependent manner, therefore participates in hepatic bile acid homeostasis and consequently to lipid homeostasis through regulation of biliary lipid secretion in a bile salts dependent manner. Transports taurine-conjugated bile salts more rapidly than glycine-conjugated bile salts. Also transports non-bile acid compounds, such as pravastatin and fexofenadine in an ATP-dependent manner and may be involved in their biliary excretion. The protein is Bile salt export pump of Rattus norvegicus (Rat).